Consider the following 171-residue polypeptide: 3-hydroxydecanoyl-[acyl-carrier-protein] dehydratase (171 aa).

Residue His-70 is part of the active site.

This sequence belongs to the thioester dehydratase family. FabA subfamily. Homodimer.

Its subcellular location is the cytoplasm. It catalyses the reaction a (3R)-hydroxyacyl-[ACP] = a (2E)-enoyl-[ACP] + H2O. The catalysed reaction is (3R)-hydroxydecanoyl-[ACP] = (2E)-decenoyl-[ACP] + H2O. The enzyme catalyses (2E)-decenoyl-[ACP] = (3Z)-decenoyl-[ACP]. It functions in the pathway lipid metabolism; fatty acid biosynthesis. Functionally, necessary for the introduction of cis unsaturation into fatty acids. Catalyzes the dehydration of (3R)-3-hydroxydecanoyl-ACP to E-(2)-decenoyl-ACP and then its isomerization to Z-(3)-decenoyl-ACP. Can catalyze the dehydratase reaction for beta-hydroxyacyl-ACPs with saturated chain lengths up to 16:0, being most active on intermediate chain length. This is 3-hydroxydecanoyl-[acyl-carrier-protein] dehydratase from Shewanella sp. (strain MR-4).